Here is a 101-residue protein sequence, read N- to C-terminus: NAD(P)H-quinone oxidoreductase subunit 4L, chloroplastic (101 aa).

A run of 3 helical transmembrane segments spans residues 2 to 22, 32 to 52, and 61 to 81; these read MLEHVLVLSAYLFSIGIYGLI, MCLELILNAVNINLVTFSDLF, and IFSIFVIAIAAAEAAIGPAIV.

Belongs to the complex I subunit 4L family. In terms of assembly, NDH is composed of at least 16 different subunits, 5 of which are encoded in the nucleus.

The protein resides in the plastid. It localises to the chloroplast thylakoid membrane. The enzyme catalyses a plastoquinone + NADH + (n+1) H(+)(in) = a plastoquinol + NAD(+) + n H(+)(out). It catalyses the reaction a plastoquinone + NADPH + (n+1) H(+)(in) = a plastoquinol + NADP(+) + n H(+)(out). Its function is as follows. NDH shuttles electrons from NAD(P)H:plastoquinone, via FMN and iron-sulfur (Fe-S) centers, to quinones in the photosynthetic chain and possibly in a chloroplast respiratory chain. The immediate electron acceptor for the enzyme in this species is believed to be plastoquinone. Couples the redox reaction to proton translocation, and thus conserves the redox energy in a proton gradient. The chain is NAD(P)H-quinone oxidoreductase subunit 4L, chloroplastic from Illicium oligandrum (Star anise).